Here is a 238-residue protein sequence, read N- to C-terminus: Opacity protein opA60 (238 aa).

Residue Ala-1 is a signal peptide.

The protein belongs to the opacity porin family.

It localises to the cell outer membrane. Implicated in a number of adherence functions. OPA proteins are implicated in pathogenesis and are subject to phase variation. This is Opacity protein opA60 (opaH) from Neisseria gonorrhoeae.